The following is a 216-amino-acid chain: Ras-related protein RabN1 (216 aa).

15–22 (GDYNSGKT) contributes to the GTP binding site. Residues 37–44 (TCPSTFDL) carry the Effector region motif. Residues 62-66 (DTAGQ) and 128-131 (TKSD) contribute to the GTP site. Cys-216 carries the S-geranylgeranyl cysteine lipid modification.

Belongs to the small GTPase superfamily. Rab family.

The protein resides in the cell membrane. The sequence is that of Ras-related protein RabN1 (rabN1) from Dictyostelium discoideum (Social amoeba).